The following is an 81-amino-acid chain: Putative defensin-like protein 26 (81 aa).

A signal peptide spans 1–21 (MASLKVFSFALLIVLTFSVIG). Cystine bridges form between C33/C81 and C52/C77.

This sequence belongs to the DEFL family.

The protein localises to the secreted. In Arabidopsis thaliana (Mouse-ear cress), this protein is Putative defensin-like protein 26.